A 228-amino-acid polypeptide reads, in one-letter code: MSVERTLHHFPLDPASRQVRLALGEKRLPFVEMQVRYWEMPPEFTSLNPSGMPPVLVETKHQRNLVICETRAILEHIEETETEPPLLGRDPAERAEARRLLQWFDRKFDNEVNGFLLHEKMEKRLLRMGAPDLAALRQGREALRMHLGYIESLLQTRDWLAGRRMSLADFAAAAHLSVIDYFGDVPWKDFQAAKTWYMKLKSRPCFRPILADRWPGLAPAAHYDDLDF.

Positions 3-85 (VERTLHHFPL…HIEETETEPP (83 aa)) constitute a GST N-terminal domain. Residues 90 to 223 (DPAERAEARR…WPGLAPAAHY (134 aa)) form the GST C-terminal domain.

The protein belongs to the GST superfamily. Homodimer. Interacts with FtsZ filaments. Probably interacts with the GTPase domain of FtsZ.

It is found in the cytoplasm. Its function is as follows. Essential cell division protein that must bind to FtsZ for division to occur. Critical coordinator of envelope constriction through its interaction with FtsZ. Promotes the formation of highly curved FtsZ filaments, reduces the GTPase activity of FtsZ and stabilizes FtsZ polymers. May regulate FtsZ function by modulating its superstructure. Does not bind to glutathione. The polypeptide is FtsZ-localized protein A (Caulobacter vibrioides (strain NA1000 / CB15N) (Caulobacter crescentus)).